The chain runs to 133 residues: Holo-[acyl-carrier-protein] synthase (133 aa).

Asp8 and Glu58 together coordinate Mg(2+).

Belongs to the P-Pant transferase superfamily. AcpS family. Requires Mg(2+) as cofactor.

It is found in the cytoplasm. The catalysed reaction is apo-[ACP] + CoA = holo-[ACP] + adenosine 3',5'-bisphosphate + H(+). Its function is as follows. Transfers the 4'-phosphopantetheine moiety from coenzyme A to a Ser of acyl-carrier-protein. This chain is Holo-[acyl-carrier-protein] synthase, found in Erythrobacter litoralis (strain HTCC2594).